We begin with the raw amino-acid sequence, 308 residues long: tRNA pseudouridine synthase B (308 aa).

D44 acts as the Nucleophile in catalysis.

The protein belongs to the pseudouridine synthase TruB family. Type 1 subfamily.

It carries out the reaction uridine(55) in tRNA = pseudouridine(55) in tRNA. In terms of biological role, responsible for synthesis of pseudouridine from uracil-55 in the psi GC loop of transfer RNAs. The protein is tRNA pseudouridine synthase B of Bdellovibrio bacteriovorus (strain ATCC 15356 / DSM 50701 / NCIMB 9529 / HD100).